The following is a 651-amino-acid chain: Methionine--tRNA ligase (651 aa).

Residues 10–20 carry the 'HIGH' region motif; it reads AYTNGPLHLGH. Zn(2+) is bound by residues cysteine 142, cysteine 145, cysteine 154, and cysteine 157. The 'KMSKS' region signature appears at 320-324; sequence KMSTS. An ATP-binding site is contributed by threonine 323. The region spanning 550–651 is the tRNA-binding domain; sequence YLEKIDLRVG…KDIKAGSKVR (102 aa).

Belongs to the class-I aminoacyl-tRNA synthetase family. MetG type 1 subfamily. Homodimer. Zn(2+) serves as cofactor.

Its subcellular location is the cytoplasm. It carries out the reaction tRNA(Met) + L-methionine + ATP = L-methionyl-tRNA(Met) + AMP + diphosphate. Its function is as follows. Is required not only for elongation of protein synthesis but also for the initiation of all mRNA translation through initiator tRNA(fMet) aminoacylation. The chain is Methionine--tRNA ligase from Methanocaldococcus jannaschii (strain ATCC 43067 / DSM 2661 / JAL-1 / JCM 10045 / NBRC 100440) (Methanococcus jannaschii).